The chain runs to 292 residues: ATP synthase gamma chain (292 aa).

The protein belongs to the ATPase gamma chain family. In terms of assembly, F-type ATPases have 2 components, CF(1) - the catalytic core - and CF(0) - the membrane proton channel. CF(1) has five subunits: alpha(3), beta(3), gamma(1), delta(1), epsilon(1). CF(0) has three main subunits: a, b and c.

The protein localises to the cell inner membrane. Its function is as follows. Produces ATP from ADP in the presence of a proton gradient across the membrane. The gamma chain is believed to be important in regulating ATPase activity and the flow of protons through the CF(0) complex. In Hydrogenobaculum sp. (strain Y04AAS1), this protein is ATP synthase gamma chain.